A 727-amino-acid chain; its full sequence is 5'-AMP-activated serine/threonine-protein kinase catalytic subunit alpha (727 aa).

The Protein kinase domain maps to 31–284 (YRLDKTLGIG…IHEIRNHPWF (254 aa)). Residues 37 to 45 (LGIGSFGKV) and Lys-60 contribute to the ATP site. Asp-154 acts as the Proton acceptor in catalysis. Thr-188 is modified (phosphothreonine). Residues 382-590 (FTTTTGFNPS…GSNNNSYEGG (209 aa)) are disordered. Low complexity-rich tracts occupy residues 391 to 483 (SNSN…SSIS) and 494 to 586 (NLNN…NNNS). The region spanning 679 to 727 (RMVNGKPIKLVLQLFRVAENRYLLDIKKIEGEIFIFFDICSLMLEELNL) is the KA1 domain.

It belongs to the protein kinase superfamily. CAMK Ser/Thr protein kinase family. SNF1 subfamily. In terms of assembly, heterotrimer of an alpha catalytic subunit, a beta and a gamma non-catalytic subunits.

It carries out the reaction L-seryl-[protein] + ATP = O-phospho-L-seryl-[protein] + ADP + H(+). The catalysed reaction is L-threonyl-[protein] + ATP = O-phospho-L-threonyl-[protein] + ADP + H(+). Activated enzyme phosphorylates target proteins and initiates downstream signaling pathways that shift metabolism from anabolic to catabolic pathways. Acts as a highly sensitive cellular energy sensor. In Dictyostelium discoideum (Social amoeba), this protein is 5'-AMP-activated serine/threonine-protein kinase catalytic subunit alpha (snfA).